Reading from the N-terminus, the 201-residue chain is MYVPTIENALVPVVVEQSSRGERSFDIFSRLLRERVIFLTGEVEDNMANLIVAQMLFLEAENPDKDIHLYINSPGGSVTAGMAIYDTMQFIKPDVVTYCMGQAASMGAFLLNAGAKGKRYCLENARVMIHQPLGGFRGQASDIEIHAREILFIKERLNRLMAEHSGQDYERVARDTDRDNFMTAQAAKEYGLVDEVLSKRP.

The active-site Nucleophile is S105. The active site involves H130.

This sequence belongs to the peptidase S14 family. As to quaternary structure, fourteen ClpP subunits assemble into 2 heptameric rings which stack back to back to give a disk-like structure with a central cavity, resembling the structure of eukaryotic proteasomes.

It localises to the cytoplasm. The enzyme catalyses Hydrolysis of proteins to small peptides in the presence of ATP and magnesium. alpha-casein is the usual test substrate. In the absence of ATP, only oligopeptides shorter than five residues are hydrolyzed (such as succinyl-Leu-Tyr-|-NHMec, and Leu-Tyr-Leu-|-Tyr-Trp, in which cleavage of the -Tyr-|-Leu- and -Tyr-|-Trp bonds also occurs).. In terms of biological role, cleaves peptides in various proteins in a process that requires ATP hydrolysis. Has a chymotrypsin-like activity. Plays a major role in the degradation of misfolded proteins. The sequence is that of ATP-dependent Clp protease proteolytic subunit from Acinetobacter baylyi (strain ATCC 33305 / BD413 / ADP1).